We begin with the raw amino-acid sequence, 310 residues long: Aspartate carbamoyltransferase catalytic subunit (310 aa).

Carbamoyl phosphate contacts are provided by Arg54 and Thr55. Lys84 is an L-aspartate binding site. Carbamoyl phosphate contacts are provided by Arg105, His134, and Gln137. Residues Arg167 and Arg229 each contribute to the L-aspartate site. Carbamoyl phosphate contacts are provided by Leu267 and Pro268.

It belongs to the aspartate/ornithine carbamoyltransferase superfamily. ATCase family. Heterododecamer (2C3:3R2) of six catalytic PyrB chains organized as two trimers (C3), and six regulatory PyrI chains organized as three dimers (R2).

The catalysed reaction is carbamoyl phosphate + L-aspartate = N-carbamoyl-L-aspartate + phosphate + H(+). The protein operates within pyrimidine metabolism; UMP biosynthesis via de novo pathway; (S)-dihydroorotate from bicarbonate: step 2/3. In terms of biological role, catalyzes the condensation of carbamoyl phosphate and aspartate to form carbamoyl aspartate and inorganic phosphate, the committed step in the de novo pyrimidine nucleotide biosynthesis pathway. The polypeptide is Aspartate carbamoyltransferase catalytic subunit (Enterobacter sp. (strain 638)).